Reading from the N-terminus, the 189-residue chain is UPF0312 protein VV2_0231 (189 aa).

A signal peptide spans 1–22 (MRKSVIATGLALMMAVPFAANA).

This sequence belongs to the UPF0312 family. Type 1 subfamily.

The protein localises to the periplasm. This is UPF0312 protein VV2_0231 from Vibrio vulnificus (strain CMCP6).